We begin with the raw amino-acid sequence, 235 residues long: Claudin-16 (235 aa).

The Cytoplasmic segment spans residues 1 to 3 (MRD). A helical membrane pass occupies residues 4–24 (LLQYIACFFAFFSAGFLIVAT). Over 25 to 79 (WTDCWMVNADDSLEVSTKCRGLWWECVTNAFDGIRTCDEYDSILAEHPLKLVVTR) the chain is Extracellular. The chain crosses the membrane as a helical span at residues 80–100 (ALMITADILAGFGFLTLLLGL). The Cytoplasmic portion of the chain corresponds to 101 to 115 (DCVKFLPDEPYIKVR). The chain crosses the membrane as a helical span at residues 116–136 (ICFVAGATLLIAGTPGIIGSV). Topologically, residues 137-169 (WYAVDVYVERSTLVLHNIFLGIQYKFGWSCWLG) are extracellular. A helical membrane pass occupies residues 170 to 190 (MAGSLGCFLAGAVLTCCLYLF). The Cytoplasmic segment spans residues 191-235 (KDVGPERNYPYSLRKAYSAAGVSMAKSYSAPRTETAKMYAVDTRV). The Interaction with TJP1 motif lies at 233-235 (TRV).

The protein belongs to the claudin family. As to quaternary structure, can form heteropolymeric tight junction strands with other claudins. Interacts with CLDN19. Interacts (via PDZ-binding motif TRV) with TJP1 (via PDZ domain). Cannot form tight junction strands on its own. Kidney-specific, including the thick ascending limb of Henle (TAL).

It localises to the cell junction. It is found in the tight junction. The protein localises to the cell membrane. It carries out the reaction Mg(2+)(in) = Mg(2+)(out). It catalyses the reaction Ca(2+)(in) = Ca(2+)(out). The enzyme catalyses Na(+)(in) = Na(+)(out). The catalysed reaction is K(+)(in) = K(+)(out). It carries out the reaction Rb(+)(in) = Rb(+)(out). It catalyses the reaction Cs(+)(in) = Cs(+)(out). The enzyme catalyses Li(+)(in) = Li(+)(out). In terms of biological role, forms paracellular channels: coassembles with CLDN19 into tight junction strands with cation-selective channels through the strands, conveying epithelial permeability in a process known as paracellular tight junction permeability. Involved in the maintenance of ion gradients along the nephron. In the thick ascending limb (TAL) of Henle's loop, facilitates sodium paracellular permeability from the interstitial compartment to the lumen, contributing to the lumen-positive transepithelial potential that drives paracellular magnesium and calcium reabsorption. The chain is Claudin-16 from Homo sapiens (Human).